Reading from the N-terminus, the 53-residue chain is IgW transmembrane form Tm1T3/Tm6T3/Tm3C4 (53 aa).

Positions 1 to 25 are disordered; sequence VQAVPPDVKGEEGKEEVEDMDGDDN. Acidic residues predominate over residues 13–24; sequence GKEEVEDMDGDD. Residues 29 to 49 form a helical membrane-spanning segment; it reads VAAFAILFILSFLYSTFVTVV.

In terms of tissue distribution, expressed in the spleen, pancreas, peripheral blood lymphocytes and at low levels in the epigonal organ.

It is found in the membrane. This Ginglymostoma cirratum (Nurse shark) protein is IgW transmembrane form Tm1T3/Tm6T3/Tm3C4.